Reading from the N-terminus, the 470-residue chain is Cysteine--tRNA ligase (470 aa).

Cys46 is a Zn(2+) binding site. Positions 48–58 match the 'HIGH' region motif; it reads PTVYDLAHIGN. Residues Cys230, His255, and Glu259 each contribute to the Zn(2+) site. A 'KMSKS' region motif is present at residues 288 to 292; the sequence is KMSKS. Lys291 is a binding site for ATP.

Belongs to the class-I aminoacyl-tRNA synthetase family. In terms of assembly, monomer. Zn(2+) is required as a cofactor.

It localises to the cytoplasm. The catalysed reaction is tRNA(Cys) + L-cysteine + ATP = L-cysteinyl-tRNA(Cys) + AMP + diphosphate. This is Cysteine--tRNA ligase from Granulibacter bethesdensis (strain ATCC BAA-1260 / CGDNIH1).